A 276-amino-acid polypeptide reads, in one-letter code: MKKWLICSFVLVLLVSFTACSPSAEHESIKIGIAESDGAIWNYIAQKAEEAGLDIQLIPFSDYAESDIALANKEIDANAFQTISYFQSFTEKYKLNLAPLGTTYITPMGIYSKRYERIRDISRGAVVSVPDKAFDFGRALTVLQEAGLLTLKNGFNGTGSVDMIKDNPRHLKLKAVRQQDAVSGADVFVMKPSEAKKAGLNPKKHTLKSGGLMSEEEMNLIVVRAEDQDREALQTILELYQADDTAAFIEKEYQGDLVPAFLPLKRLSDWKNEFEH.

An N-terminal signal peptide occupies residues 1–19 (MKKWLICSFVLVLLVSFTA). The N-palmitoyl cysteine moiety is linked to residue Cys20. Cys20 carries the S-diacylglycerol cysteine lipid modification.

It belongs to the NlpA lipoprotein family.

The protein localises to the cell membrane. This is an uncharacterized protein from Bacillus subtilis (strain 168).